We begin with the raw amino-acid sequence, 168 residues long: ATP synthase subunit b (168 aa).

The chain crosses the membrane as a helical span at residues 10–30 (STILGNFILVTASFAVLIILI).

It belongs to the ATPase B chain family. F-type ATPases have 2 components, F(1) - the catalytic core - and F(0) - the membrane proton channel. F(1) has five subunits: alpha(3), beta(3), gamma(1), delta(1), epsilon(1). F(0) has three main subunits: a(1), b(2) and c(10-14). The alpha and beta chains form an alternating ring which encloses part of the gamma chain. F(1) is attached to F(0) by a central stalk formed by the gamma and epsilon chains, while a peripheral stalk is formed by the delta and b chains.

Its subcellular location is the cell membrane. Its function is as follows. F(1)F(0) ATP synthase produces ATP from ADP in the presence of a proton or sodium gradient. F-type ATPases consist of two structural domains, F(1) containing the extramembraneous catalytic core and F(0) containing the membrane proton channel, linked together by a central stalk and a peripheral stalk. During catalysis, ATP synthesis in the catalytic domain of F(1) is coupled via a rotary mechanism of the central stalk subunits to proton translocation. Component of the F(0) channel, it forms part of the peripheral stalk, linking F(1) to F(0). The polypeptide is ATP synthase subunit b (Streptococcus suis (strain 98HAH33)).